A 174-amino-acid polypeptide reads, in one-letter code: Shikimate kinase 2 (174 aa).

12-17 (GCGKTT) contributes to the ATP binding site. T16 and D32 together coordinate Mg(2+). 3 residues coordinate substrate: D34, R58, and G79. Positions 112–126 (QAAPEEDLRPTLTGK) are LID domain. R120 contacts ATP. Residue R139 coordinates substrate.

It belongs to the shikimate kinase family. AroL subfamily. Monomer. The cofactor is Mg(2+).

It localises to the cytoplasm. It carries out the reaction shikimate + ATP = 3-phosphoshikimate + ADP + H(+). The protein operates within metabolic intermediate biosynthesis; chorismate biosynthesis; chorismate from D-erythrose 4-phosphate and phosphoenolpyruvate: step 5/7. Its function is as follows. Catalyzes the specific phosphorylation of the 3-hydroxyl group of shikimic acid using ATP as a cosubstrate. This chain is Shikimate kinase 2, found in Escherichia coli O7:K1 (strain IAI39 / ExPEC).